A 61-amino-acid chain; its full sequence is UPF0434 protein Bfl377 (61 aa).

It belongs to the UPF0434 family.

In Blochmanniella floridana, this protein is UPF0434 protein Bfl377.